A 258-amino-acid polypeptide reads, in one-letter code: Imidazole glycerol phosphate synthase subunit HisF (258 aa).

Residues Asp-11 and Asp-130 contribute to the active site.

Belongs to the HisA/HisF family. As to quaternary structure, heterodimer of HisH and HisF.

It localises to the cytoplasm. The enzyme catalyses 5-[(5-phospho-1-deoxy-D-ribulos-1-ylimino)methylamino]-1-(5-phospho-beta-D-ribosyl)imidazole-4-carboxamide + L-glutamine = D-erythro-1-(imidazol-4-yl)glycerol 3-phosphate + 5-amino-1-(5-phospho-beta-D-ribosyl)imidazole-4-carboxamide + L-glutamate + H(+). Its pathway is amino-acid biosynthesis; L-histidine biosynthesis; L-histidine from 5-phospho-alpha-D-ribose 1-diphosphate: step 5/9. Its function is as follows. IGPS catalyzes the conversion of PRFAR and glutamine to IGP, AICAR and glutamate. The HisF subunit catalyzes the cyclization activity that produces IGP and AICAR from PRFAR using the ammonia provided by the HisH subunit. In Methylorubrum populi (strain ATCC BAA-705 / NCIMB 13946 / BJ001) (Methylobacterium populi), this protein is Imidazole glycerol phosphate synthase subunit HisF.